A 505-amino-acid chain; its full sequence is Catalase (505 aa).

Catalysis depends on residues His-58 and Asn-131. Residue Tyr-341 participates in heme binding.

This sequence belongs to the catalase family. Heme is required as a cofactor.

The catalysed reaction is 2 H2O2 = O2 + 2 H2O. Its function is as follows. Decomposes hydrogen peroxide into water and oxygen; serves to protect cells from the toxic effects of hydrogen peroxide. The sequence is that of Catalase (kat) from Methanosarcina barkeri (strain Fusaro / DSM 804).